The chain runs to 87 residues: Small ribosomal subunit protein bS20 (87 aa).

The protein belongs to the bacterial ribosomal protein bS20 family.

In terms of biological role, binds directly to 16S ribosomal RNA. The polypeptide is Small ribosomal subunit protein bS20 (Clostridium botulinum (strain Alaska E43 / Type E3)).